A 268-amino-acid polypeptide reads, in one-letter code: WUSCHEL-related homeobox 12 (268 aa).

The span at 1–16 (MNQEGASHSPSSTSTE) shows a compositional bias: polar residues. 2 disordered regions span residues 1-22 (MNQE…RARW) and 173-198 (SDHN…QNSN). A DNA-binding region (homeobox; WUS-type) is located at residues 17–81 (PVRARWSPKP…NRRSRSRRRH (65 aa)).

The protein belongs to the WUS homeobox family.

The protein localises to the nucleus. In terms of biological role, transcription factor which may be involved in developmental processes. This Arabidopsis thaliana (Mouse-ear cress) protein is WUSCHEL-related homeobox 12 (WOX12).